Here is a 436-residue protein sequence, read N- to C-terminus: Serine/threonine-protein kinase 40 (436 aa).

A compositionally biased stretch (basic and acidic residues) spans 1–10 (MKRRASDRGA). The interval 1-25 (MKRRASDRGAGETSARAKALGSGIS) is disordered. A Protein kinase domain is found at 35–332 (FILGPRLGNS…DVLEALSSII (298 aa)). ATP-binding positions include 41–49 (LGNSPVPSI) and K66. D197 functions as the Proton acceptor in the catalytic mechanism. Positions 396-417 (RSWVPKRQSGAGVPPVRRLGHD) are disordered.

Belongs to the protein kinase superfamily. CAMK Ser/Thr protein kinase family.

The protein resides in the nucleus. It is found in the cytoplasm. The catalysed reaction is L-seryl-[protein] + ATP = O-phospho-L-seryl-[protein] + ADP + H(+). The enzyme catalyses L-threonyl-[protein] + ATP = O-phospho-L-threonyl-[protein] + ADP + H(+). May be a negative regulator of NF-kappa-B and p53-mediated gene transcription. The protein is Serine/threonine-protein kinase 40 (STK40) of Bos taurus (Bovine).